Reading from the N-terminus, the 542-residue chain is Quinidine resistance protein 2 (542 aa).

Topologically, residues 1–67 are cytoplasmic; the sequence is MAGATSSIIR…SFKTVLIAQC (67 aa). Serine 21 carries the post-translational modification Phosphoserine. Position 38 is a phosphothreonine (threonine 38). Phosphoserine is present on serine 40. The helical transmembrane segment at 68-88 threads the bilayer; sequence AFTGFFSTIAGAIYYPVLSVI. Topologically, residues 89-100 are extracellular; sequence ERKFDIDEELVN. The helical transmembrane segment at 101 to 121 threads the bilayer; the sequence is VTVVVYFVFQGLAPTFMGGFA. The Cytoplasmic portion of the chain corresponds to 122 to 127; sequence DSLGRR. The helical transmembrane segment at 128-148 threads the bilayer; that stretch reads PVVLVAIVIYFGACIGLACAQ. Threonine 149 is a topological domain (extracellular). A helical transmembrane segment spans residues 150–170; that stretch reads YAQIIVLRCLQAAGISPVIAI. Residues 171-187 lie on the Cytoplasmic side of the membrane; that stretch reads NSGIMGDVTTRAERGGY. The helical transmembrane segment at 188-208 threads the bilayer; that stretch reads VGYVAGFQVLGSAFGALIGAG. Topologically, residues 209–216 are extracellular; that stretch reads LSSRWGWR. The chain crosses the membrane as a helical span at residues 217–237; it reads AIFWFLAIGSGICFLASFLIL. The Cytoplasmic portion of the chain corresponds to 238–300; the sequence is PETKRNISGN…APFKILKAYE (63 aa). A helical transmembrane segment spans residues 301–321; sequence ICILMLVAGLQFAMYTTHLTA. The Extracellular segment spans residues 322–333; it reads LSTALSKQYHLT. Residues 334 to 354 form a helical membrane-spanning segment; that stretch reads VAKVGLCYLPSGICTLCSIVI. Residues 355 to 413 lie on the Cytoplasmic side of the membrane; sequence AGRYLNWNYRRRLKYYQNWLGKKRSKLLEEHDNDLNLVQRIIENDPKYTFNIFKARLQP. Residues 414–434 form a helical membrane-spanning segment; the sequence is AFVTLLLSSSGFCAYGWCITV. Over 435–437 the chain is Extracellular; sequence KAP. The helical transmembrane segment at 438–458 threads the bilayer; sequence LAAVLCMSGFASLFSNCILTF. The Cytoplasmic segment spans residues 459–472; sequence STTLIVDLFPTKTS. A helical membrane pass occupies residues 473 to 493; it reads TATGCLNLFRCILSAVFIAAL. At 494–503 the chain is on the extracellular side; it reads SKMVEKMKFG. Residues 504–524 form a helical membrane-spanning segment; the sequence is GVFTFLGALTSSSSILLFILL. Topologically, residues 525 to 542 are cytoplasmic; it reads RKGKELAFKRKKQELGVN.

The protein belongs to the major facilitator superfamily. CAR1 family.

It localises to the cell membrane. Its function is as follows. Multidrug resistance transporter involved in resistance and adaptation to quinidine and to the herbicide barban (4-chloro-2-butynyl [3-chlorophenyl] carbamate). Implicated in potassium uptake. This Saccharomyces cerevisiae (strain ATCC 204508 / S288c) (Baker's yeast) protein is Quinidine resistance protein 2 (QDR2).